The chain runs to 483 residues: GTPase Der (483 aa).

2 consecutive EngA-type G domains span residues 3 to 167 (FTVA…GEER) and 212 to 387 (LRIA…EIWN). Residues 9–16 (GRPNVGKS), 56–60 (DTAGL), 119–122 (NKAE), 218–225 (GRPNAGKS), 265–269 (DTAGL), and 330–333 (NKWD) contribute to the GTP site. The KH-like domain occupies 388-472 (RRVSTGRLNR…PIRLSLRTSD (85 aa)).

Belongs to the TRAFAC class TrmE-Era-EngA-EngB-Septin-like GTPase superfamily. EngA (Der) GTPase family. In terms of assembly, associates with the 50S ribosomal subunit.

Functionally, GTPase that plays an essential role in the late steps of ribosome biogenesis. The sequence is that of GTPase Der from Brucella anthropi (strain ATCC 49188 / DSM 6882 / CCUG 24695 / JCM 21032 / LMG 3331 / NBRC 15819 / NCTC 12168 / Alc 37) (Ochrobactrum anthropi).